A 151-amino-acid chain; its full sequence is SsrA-binding protein (151 aa).

It belongs to the SmpB family.

The protein localises to the cytoplasm. Its function is as follows. Required for rescue of stalled ribosomes mediated by trans-translation. Binds to transfer-messenger RNA (tmRNA), required for stable association of tmRNA with ribosomes. tmRNA and SmpB together mimic tRNA shape, replacing the anticodon stem-loop with SmpB. tmRNA is encoded by the ssrA gene; the 2 termini fold to resemble tRNA(Ala) and it encodes a 'tag peptide', a short internal open reading frame. During trans-translation Ala-aminoacylated tmRNA acts like a tRNA, entering the A-site of stalled ribosomes, displacing the stalled mRNA. The ribosome then switches to translate the ORF on the tmRNA; the nascent peptide is terminated with the 'tag peptide' encoded by the tmRNA and targeted for degradation. The ribosome is freed to recommence translation, which seems to be the essential function of trans-translation. In Flavobacterium johnsoniae (strain ATCC 17061 / DSM 2064 / JCM 8514 / BCRC 14874 / CCUG 350202 / NBRC 14942 / NCIMB 11054 / UW101) (Cytophaga johnsonae), this protein is SsrA-binding protein.